The sequence spans 390 residues: Fer-related kinase 1 (390 aa).

The SH2 domain occupies 23–119 (YYHGMVPRQD…ASGAKIRRPM (97 aa)). Positions 131 to 386 (IVANKKLGEG…SIHKKLREFY (256 aa)) constitute a Protein kinase domain. ATP-binding positions include 137–145 (LGEGAFGDV) and Lys161. Catalysis depends on Asp252, which acts as the Proton acceptor.

The protein belongs to the protein kinase superfamily. Tyr protein kinase family. Fes/fps subfamily. In terms of assembly, interacts with hmp-2. The cofactor is Mn(2+).

Its subcellular location is the nucleus. It is found in the cytoplasm. The protein localises to the cell junction. It localises to the cell membrane. It carries out the reaction L-tyrosyl-[protein] + ATP = O-phospho-L-tyrosyl-[protein] + ADP + H(+). In terms of biological role, non-receptor tyrosine-protein kinase which plays a role in morphogenesis by regulating the epidermal enclosure of the embryo, independently of its kinase activity. Prevents hyperactivation of the Wnt signaling pathway during endoderm development, probably by preventing hmp-2 nuclear translocation. The chain is Fer-related kinase 1 from Caenorhabditis elegans.